A 280-amino-acid polypeptide reads, in one-letter code: Putative methyltransferase mtx subunit X (280 aa).

The protein belongs to the MtxX family. In terms of assembly, may be part of a complex composed of 3 subunits; MtxA, MtxH and MtxX.

In Methanosarcina mazei (strain ATCC BAA-159 / DSM 3647 / Goe1 / Go1 / JCM 11833 / OCM 88) (Methanosarcina frisia), this protein is Putative methyltransferase mtx subunit X (mtxX).